The sequence spans 670 residues: Transketolase, chromosomal (670 aa).

His32 is a binding site for substrate. Residues His72 and 120–122 (GPL) each bind thiamine diphosphate. Asp161 provides a ligand contact to Mg(2+). Thiamine diphosphate contacts are provided by Gly162 and Asn191. Mg(2+) contacts are provided by Asn191 and Ile193. Substrate-binding residues include His267, Arg364, and Ser391. Residue His267 participates in thiamine diphosphate binding. Glu417 serves as the catalytic Proton donor. A thiamine diphosphate-binding site is contributed by Phe443. Substrate contacts are provided by His467, Asp475, and Arg526.

Belongs to the transketolase family. Homodimer. It depends on Mg(2+) as a cofactor. Ca(2+) is required as a cofactor. The cofactor is Mn(2+). Requires Co(2+) as cofactor. Thiamine diphosphate serves as cofactor.

It catalyses the reaction D-sedoheptulose 7-phosphate + D-glyceraldehyde 3-phosphate = aldehydo-D-ribose 5-phosphate + D-xylulose 5-phosphate. The protein operates within carbohydrate biosynthesis; Calvin cycle. In terms of biological role, catalyzes the transfer of a two-carbon ketol group from a ketose donor to an aldose acceptor, via a covalent intermediate with the cofactor thiamine pyrophosphate. The sequence is that of Transketolase, chromosomal (cbbTC) from Cupriavidus necator (strain ATCC 17699 / DSM 428 / KCTC 22496 / NCIMB 10442 / H16 / Stanier 337) (Ralstonia eutropha).